Here is a 194-residue protein sequence, read N- to C-terminus: Thioredoxin O1, mitochondrial (194 aa).

A mitochondrion-targeting transit peptide spans 1–42; the sequence is MKGNWSIVRKVLHRQFSTLRSSTPSSRLSTSIRPLVLAPNSI. S75 carries the post-translational modification Phosphoserine. In terms of domain architecture, Thioredoxin spans 89 to 194; sequence VKSEEEFINA…LKNLMEQLYK (106 aa). Catalysis depends on nucleophile residues C118 and C121. A disulfide bridge connects residues C118 and C121.

This sequence belongs to the thioredoxin family. Plant O-type subfamily.

It localises to the mitochondrion matrix. In terms of biological role, thiol-disulfide oxidoreductase that may participate in various redox reactions. Possesses insulin disulfide bonds reducing activity. Reduced by thioredoxin reductases NTRA and NTRB. This chain is Thioredoxin O1, mitochondrial, found in Arabidopsis thaliana (Mouse-ear cress).